Reading from the N-terminus, the 239-residue chain is ATP synthase subunit a (239 aa).

6 consecutive transmembrane segments (helical) span residues 31-51 (FLLQ…LGLG), 91-111 (VFPL…LGMI), 125-145 (AACA…FHGV), 151-171 (FMGP…IGHI), 194-214 (ILFF…LGLF), and 215-235 (TGFI…AGAI).

It belongs to the ATPase A chain family. In terms of assembly, F-type ATPases have 2 components, CF(1) - the catalytic core - and CF(0) - the membrane proton channel. CF(1) has five subunits: alpha(3), beta(3), gamma(1), delta(1), epsilon(1). CF(0) has three main subunits: a(1), b(2) and c(9-12). The alpha and beta chains form an alternating ring which encloses part of the gamma chain. CF(1) is attached to CF(0) by a central stalk formed by the gamma and epsilon chains, while a peripheral stalk is formed by the delta and b chains.

The protein localises to the cell inner membrane. Key component of the proton channel; it plays a direct role in the translocation of protons across the membrane. The polypeptide is ATP synthase subunit a (Syntrophobacter fumaroxidans (strain DSM 10017 / MPOB)).